The following is an 86-amino-acid chain: Small ribosomal subunit protein uS17 (86 aa).

This sequence belongs to the universal ribosomal protein uS17 family. As to quaternary structure, part of the 30S ribosomal subunit.

Its function is as follows. One of the primary rRNA binding proteins, it binds specifically to the 5'-end of 16S ribosomal RNA. This Roseiflexus sp. (strain RS-1) protein is Small ribosomal subunit protein uS17.